Consider the following 368-residue polypeptide: MIKKTILNDTHRALGAKMVDFSGWEMPIHYGSQIDEHHHVRRNAGIFDVSHMTVIDLHGTQVRPLLRRLLANSVDKLKVPGKALYSCMLNPQGGVIDDLIVYYLREDYFRFIVNAATREKDLAWINTQASAFNVRVEERADLAMLAVQGPAARAQVTNLLAETHRDAVEKLGRFAALEVASHSKKTLFISRTGYTGEDGFEILLPQEETITLWNALLKTGVKPIGLGARDTLRLEAGMNLYGQDMDEQVSPYEAALGWTVMLDEGRNFIGRNVLEQQKTNGVSRQMIGLLMDEKGVLRHGQKVLTAQGEGHILSGTFSPTLNKAIGFARVPAGKPSEVRVNIRDRAIPVRVVKFPFVREGQTQPNIFD.

Belongs to the GcvT family. As to quaternary structure, the glycine cleavage system is composed of four proteins: P, T, L and H.

The catalysed reaction is N(6)-[(R)-S(8)-aminomethyldihydrolipoyl]-L-lysyl-[protein] + (6S)-5,6,7,8-tetrahydrofolate = N(6)-[(R)-dihydrolipoyl]-L-lysyl-[protein] + (6R)-5,10-methylene-5,6,7,8-tetrahydrofolate + NH4(+). The glycine cleavage system catalyzes the degradation of glycine. This is Aminomethyltransferase from Xylella fastidiosa (strain M12).